Here is an 87-residue protein sequence, read N- to C-terminus: uncharacterized protein (87 aa).

A helical membrane pass occupies residues 48 to 70 (GIYIPHTLIFWMCPRAMGTAITF).

It localises to the host membrane. This is an uncharacterized protein from Gallid herpesvirus 2 (strain Chicken/Md5/ATCC VR-987) (GaHV-2).